The following is a 635-amino-acid chain: UvrABC system protein C (635 aa).

Residues 1-14 are compositionally biased toward polar residues; the sequence is MAQNHMSETMNDIS. Residues 1 to 27 are disordered; it reads MAQNHMSETMNDISAESPDQPEPPRTG. The 78-residue stretch at 40–117 folds into the GIY-YIG domain; it reads SSPGVYRMLD…IKQLKPKYNV (78 aa). Positions 227–262 constitute a UVR domain; sequence TKIQEELGAEMQAASEAMEYERAAALRDRIKALTQV.

Belongs to the UvrC family. In terms of assembly, interacts with UvrB in an incision complex.

The protein localises to the cytoplasm. Its function is as follows. The UvrABC repair system catalyzes the recognition and processing of DNA lesions. UvrC both incises the 5' and 3' sides of the lesion. The N-terminal half is responsible for the 3' incision and the C-terminal half is responsible for the 5' incision. This Ruegeria sp. (strain TM1040) (Silicibacter sp.) protein is UvrABC system protein C.